A 938-amino-acid chain; its full sequence is Protein translocase subunit SecA (938 aa).

Residues Gln-90, 108–112 (GEGKT), and Asp-504 each bind ATP.

Belongs to the SecA family. Monomer and homodimer. Part of the essential Sec protein translocation apparatus which comprises SecA, SecYEG and auxiliary proteins SecDF. Other proteins may also be involved.

It is found in the cell inner membrane. It localises to the cellular thylakoid membrane. Its subcellular location is the cytoplasm. It catalyses the reaction ATP + H2O + cellular proteinSide 1 = ADP + phosphate + cellular proteinSide 2.. In terms of biological role, part of the Sec protein translocase complex. Interacts with the SecYEG preprotein conducting channel. Has a central role in coupling the hydrolysis of ATP to the transfer of proteins into and across the cell membrane, serving as an ATP-driven molecular motor driving the stepwise translocation of polypeptide chains across the membrane. Its function is as follows. Probably participates in protein translocation into and across both the cytoplasmic and thylakoid membranes in cyanobacterial cells. The chain is Protein translocase subunit SecA from Microcystis aeruginosa (strain NIES-843 / IAM M-2473).